A 164-amino-acid chain; its full sequence is MSKDHLDFPHVYKKNKVLKLKPLDLSKNPRSYYFSSQNGSIQAIINHCNNINQITARNWLKLSKVLSYFGLEKDTSDSISKNKSPFNRFLKDISHIFREGEGSTKKASELGEILEKIKNLDLKIENLNKRIPDNLVTKALIKELVKDFDERLTEVRDDIKKVIG.

This sequence belongs to the caulimoviridae ORF II family.

Functionally, this protein is involved in virus transmission. This is Aphid transmission protein from Scrophularia californica (California bee plant).